Consider the following 547-residue polypeptide: Chaperonin GroEL (547 aa).

Residues Thr30–Pro33, Lys51, Asp87–Thr91, Gly415, and Asp496 each bind ATP. The tract at residues Lys528–Phe547 is disordered.

It belongs to the chaperonin (HSP60) family. Forms a cylinder of 14 subunits composed of two heptameric rings stacked back-to-back. Interacts with the co-chaperonin GroES.

It is found in the cytoplasm. The catalysed reaction is ATP + H2O + a folded polypeptide = ADP + phosphate + an unfolded polypeptide.. Functionally, together with its co-chaperonin GroES, plays an essential role in assisting protein folding. The GroEL-GroES system forms a nano-cage that allows encapsulation of the non-native substrate proteins and provides a physical environment optimized to promote and accelerate protein folding. The chain is Chaperonin GroEL from Caulobacter vibrioides (strain ATCC 19089 / CIP 103742 / CB 15) (Caulobacter crescentus).